We begin with the raw amino-acid sequence, 431 residues long: Histidinol dehydrogenase (431 aa).

Positions 127, 189, and 212 each coordinate NAD(+). 3 residues coordinate substrate: serine 237, glutamine 259, and histidine 262. Zn(2+)-binding residues include glutamine 259 and histidine 262. Residues glutamate 326 and histidine 327 each act as proton acceptor in the active site. Substrate is bound by residues histidine 327, aspartate 360, glutamate 414, and histidine 419. Residue aspartate 360 participates in Zn(2+) binding. Histidine 419 contacts Zn(2+).

This sequence belongs to the histidinol dehydrogenase family. Zn(2+) serves as cofactor.

The enzyme catalyses L-histidinol + 2 NAD(+) + H2O = L-histidine + 2 NADH + 3 H(+). Its pathway is amino-acid biosynthesis; L-histidine biosynthesis; L-histidine from 5-phospho-alpha-D-ribose 1-diphosphate: step 9/9. Functionally, catalyzes the sequential NAD-dependent oxidations of L-histidinol to L-histidinaldehyde and then to L-histidine. This Xylella fastidiosa (strain 9a5c) protein is Histidinol dehydrogenase.